Here is a 289-residue protein sequence, read N- to C-terminus: Probable endonuclease 4 (289 aa).

Positions 74, 115, 150, 184, 187, 218, 231, 233, and 263 each coordinate Zn(2+).

The protein belongs to the AP endonuclease 2 family. It depends on Zn(2+) as a cofactor.

It catalyses the reaction Endonucleolytic cleavage to 5'-phosphooligonucleotide end-products.. Its function is as follows. Endonuclease IV plays a role in DNA repair. It cleaves phosphodiester bonds at apurinic or apyrimidinic (AP) sites, generating a 3'-hydroxyl group and a 5'-terminal sugar phosphate. The sequence is that of Probable endonuclease 4 from Mycoplasma mycoides subsp. mycoides SC (strain CCUG 32753 / NCTC 10114 / PG1).